A 63-amino-acid polypeptide reads, in one-letter code: Megourin-3 (63 aa).

As to quaternary structure, monomer. Post-translationally, contains four disulfide bonds.

It is found in the secreted. Functionally, has antimicrobial activity against Gram-positive bacteria and fungi. The chain is Megourin-3 from Megoura viciae (Vetch aphid).